The following is a 197-amino-acid chain: Protein Hikeshi (197 aa).

A required for F-X-F-G repeats-nucleoporins recognition and nuclear import region spans residues 18-55 (VAEDKFVFDLPDYENINHVVVFMLGTIPFPEGMGGSVY). Residues 124–134 (QTPVGSAAVSS) are flexible linker region involved in nuclear import of HSP70 proteins.

Belongs to the OPI10 family. As to quaternary structure, forms an asymmetric homodimer; required for binding and nuclear import of HSP70 proteins. Interacts with ATP-bound HSP70 proteins. Interacts with NUP62 and NUP153 (via F-X-F-G repeats). Interacts with HSPA8. Expressed in the central white matter of newborn and adult brain, particularly in regions where oligodendrocytes are generated.

It localises to the cytoplasm. Its subcellular location is the cytosol. The protein resides in the nucleus. Its function is as follows. Acts as a specific nuclear import carrier for HSP70 proteins following heat-shock stress: acts by mediating the nucleoporin-dependent translocation of ATP-bound HSP70 proteins into the nucleus. HSP70 proteins import is required to protect cells from heat shock damages. Does not translocate ADP-bound HSP70 proteins into the nucleus. May also be indirectly required for organization and/or function of the secretory apparatus in Club cells in lung. The sequence is that of Protein Hikeshi from Mus musculus (Mouse).